Reading from the N-terminus, the 513-residue chain is L-threonine dehydratase biosynthetic IlvA (513 aa).

An N6-(pyridoxal phosphate)lysine modification is found at lysine 61. Pyridoxal 5'-phosphate contacts are provided by residues asparagine 88, 187–191 (GGGGL), and serine 314. 2 consecutive ACT-like domains span residues 338 to 409 (ALLA…DLSN) and 432 to 504 (RLYS…DVTE).

Belongs to the serine/threonine dehydratase family. Homotetramer. Requires pyridoxal 5'-phosphate as cofactor.

It catalyses the reaction L-threonine = 2-oxobutanoate + NH4(+). The protein operates within amino-acid biosynthesis; L-isoleucine biosynthesis; 2-oxobutanoate from L-threonine: step 1/1. Functionally, catalyzes the anaerobic formation of alpha-ketobutyrate and ammonia from threonine in a two-step reaction. The first step involved a dehydration of threonine and a production of enamine intermediates (aminocrotonate), which tautomerizes to its imine form (iminobutyrate). Both intermediates are unstable and short-lived. The second step is the nonenzymatic hydrolysis of the enamine/imine intermediates to form 2-ketobutyrate and free ammonia. In the low water environment of the cell, the second step is accelerated by RidA. This is L-threonine dehydratase biosynthetic IlvA (ilvA) from Pasteurella multocida (strain Pm70).